The primary structure comprises 316 residues: MGRPPCCDKIGVKKGPWTPEEDIILVSYIQEHGPGNWRAIPSNTGLLRCSKSCRLRWTNYLRPGIKRGDFTEHEEKMIIHLQALLGNRWAAIASYLPHRTDNDIKNYWNTHLKKKLEKLQSPENGKCQDGNSSVDSDKSVSKGQWERRLQTDIHMAKQALCDALSLDKTSSSTDDPKLSTVQTTQPRPFQASTYSSAENIARLLENWKKKSPVNASSTSQAGSSESTTTSFNYPSVCLSTSSPSEGAISTNFISFNSSNSDILEDHDQAKFEAATNGVNFQDESKPILDNQMPLSLLEKWLLDDSAAVAQGQDVDF.

HTH myb-type domains follow at residues 9-65 (KIGV…RPGI) and 66-116 (KRGD…KKKL). DNA-binding regions (H-T-H motif) lie at residues 37 to 61 (WRAI…TNYL) and 89 to 112 (WAAI…NTHL). 3 disordered regions span residues 119 to 144 (LQSP…SKGQ), 168 to 193 (KTSS…QAST), and 209 to 230 (KKSP…TTTS). Positions 135-144 (DSDKSVSKGQ) are enriched in basic and acidic residues. The segment covering 181–193 (VQTTQPRPFQAST) has biased composition (polar residues). The segment covering 216–230 (SSTSQAGSSESTTTS) has biased composition (low complexity).

In terms of tissue distribution, expressed in flowers, leaves and weakly in seed pods.

It localises to the nucleus. Its function is as follows. Transcription factor. The sequence is that of Myb-related protein 306 from Antirrhinum majus (Garden snapdragon).